A 415-amino-acid chain; its full sequence is Dynein assembly factor with WD repeat domains 1 (415 aa).

WD repeat units lie at residues 90 to 129, 132 to 172, 175 to 214, 217 to 256, 259 to 298, 301 to 340, 343 to 384, and 385 to 415; these read AHIL…ELHT, GHRN…CFYT, GHTA…EVST, GHFA…KVHV, GHRG…CLAT, GHND…CLCQ, GHKG…QVLE, and GHSD…RIWH.

The protein belongs to the WD repeat WDR69 family. Expressed in organs bearing motile cilia, including the pronephros, otic vesicles and Kupffer's vesicle.

It localises to the cytoplasm. The protein localises to the cytoskeleton. The protein resides in the flagellum basal body. Its subcellular location is the flagellum axoneme. Its function is as follows. Required for axonemal dynein assembly and ciliary motility in ciliated organs, including Kupffer's vesicle, during embryogenesis. Facilitates the onset of robust cilia motility during development. The polypeptide is Dynein assembly factor with WD repeat domains 1 (daw1) (Danio rerio (Zebrafish)).